Here is a 126-residue protein sequence, read N- to C-terminus: MSDPRYQIDVSVETRYLPEQSQPEQNRYVFAYSVTIRNNGLLPAQLLSRHWLITDGDGHVQEVRGPGVIGTQPLLGPGQSHNYDSSTLLATQVGTMQGSYQMVAEDGHAFDAPIRPFRLAVPGALH.

In terms of domain architecture, ApaG spans 2 to 126 (SDPRYQIDVS…FRLAVPGALH (125 aa)).

The chain is Protein ApaG from Azotobacter vinelandii (strain DJ / ATCC BAA-1303).